The primary structure comprises 201 residues: Histone-like protein HC2 (201 aa).

Residues 1–69 (MLGVQKKCST…VAKKATAKKA (69 aa)) form a disordered region. 2 stretches are compositionally biased toward basic residues: residues 8–50 (CSTR…KTVA) and 59–69 (PVAKKATAKKA).

This sequence belongs to the histone H1/H5 family. HCT subfamily.

In terms of biological role, might have a role in establishing the nucleoid structure of elementary bodies. The protein is Histone-like protein HC2 (hctB) of Chlamydia trachomatis serovar D (strain ATCC VR-885 / DSM 19411 / UW-3/Cx).